A 220-amino-acid chain; its full sequence is Small ribosomal subunit protein uS3 (220 aa).

One can recognise a KH type-2 domain in the interval 43–111 (IRSYLTKTLD…QVQLNILEVK (69 aa)).

Belongs to the universal ribosomal protein uS3 family. Part of the 30S ribosomal subunit. Forms a tight complex with proteins S10 and S14.

Its function is as follows. Binds the lower part of the 30S subunit head. Binds mRNA in the 70S ribosome, positioning it for translation. The polypeptide is Small ribosomal subunit protein uS3 (Tropheryma whipplei (strain TW08/27) (Whipple's bacillus)).